The chain runs to 262 residues: Nurim (262 aa).

Residues 1–4 are Nuclear-facing; sequence MAPA. Residues 5 to 28 form a helical membrane-spanning segment; the sequence is LLLIPAALASFILAFGTGVEFVRF. Over 29–58 the chain is Perinuclear space; sequence TSLRPLLGRISESGSPDARQGWLAALQDQS. Residues 59–80 form a helical membrane-spanning segment; it reads ILVPLVWDLGLLLLFVGQHSLM. Topologically, residues 81–97 are nuclear; sequence ATETVKEWMSRYFGVLQ. The helical transmembrane segment at 98–114 threads the bilayer; sequence RSLYVACTALALQLVMR. Residues 115-133 are Perinuclear space-facing; that stretch reads YWEPVPRGPVLWETRTEPW. The helical transmembrane segment at 134–164 threads the bilayer; it reads ATWVPLLCFVLHVISWLLIFSILLVFDYAEL. Residues 165–191 are Nuclear-facing; sequence MGLKQVYYHVLGLGEPLALKSPRALRL. A helical membrane pass occupies residues 192–210; that stretch reads FSHLRHPVCVELLTVLWVV. Residues 211 to 216 are Perinuclear space-facing; it reads PTLGTD. A helical transmembrane segment spans residues 217–234; sequence RLLLALLLTLYLGLAHGL. The Nuclear segment spans residues 235 to 262; sequence DQHDLRYLRAQLQRKLHLLSRPQDGEAE.

It belongs to the nurim family.

It is found in the nucleus inner membrane. This is Nurim (NRM) from Bos taurus (Bovine).